A 245-amino-acid chain; its full sequence is Protein-L-isoaspartate O-methyltransferase 1 (245 aa).

The active site involves serine 76.

The protein belongs to the methyltransferase superfamily. L-isoaspartyl/D-aspartyl protein methyltransferase family.

It localises to the cytoplasm. The enzyme catalyses [protein]-L-isoaspartate + S-adenosyl-L-methionine = [protein]-L-isoaspartate alpha-methyl ester + S-adenosyl-L-homocysteine. Functionally, catalyzes the methyl esterification of L-isoaspartyl residues in peptides and proteins that result from spontaneous decomposition of normal L-aspartyl and L-asparaginyl residues. It plays a role in the repair and/or degradation of damaged proteins. This is Protein-L-isoaspartate O-methyltransferase 1 from Rhodopseudomonas palustris (strain HaA2).